Reading from the N-terminus, the 264-residue chain is 3-methyl-2-oxobutanoate hydroxymethyltransferase (264 aa).

Residues D45 and D84 each contribute to the Mg(2+) site. 3-methyl-2-oxobutanoate contacts are provided by residues 45 to 46, D84, and K112; that span reads DS. E114 provides a ligand contact to Mg(2+). Residue E181 is the Proton acceptor of the active site.

The protein belongs to the PanB family. As to quaternary structure, homodecamer; pentamer of dimers. Mg(2+) serves as cofactor.

Its subcellular location is the cytoplasm. It carries out the reaction 3-methyl-2-oxobutanoate + (6R)-5,10-methylene-5,6,7,8-tetrahydrofolate + H2O = 2-dehydropantoate + (6S)-5,6,7,8-tetrahydrofolate. It functions in the pathway cofactor biosynthesis; (R)-pantothenate biosynthesis; (R)-pantoate from 3-methyl-2-oxobutanoate: step 1/2. Catalyzes the reversible reaction in which hydroxymethyl group from 5,10-methylenetetrahydrofolate is transferred onto alpha-ketoisovalerate to form ketopantoate. This chain is 3-methyl-2-oxobutanoate hydroxymethyltransferase, found in Escherichia coli (strain 55989 / EAEC).